The following is a 210-amino-acid chain: Mitochondrial cardiolipin hydrolase (210 aa).

The Mitochondrial intermembrane portion of the chain corresponds to 1-5; the sequence is MLLWG. A helical membrane pass occupies residues 6-24; sequence RWKLAAGLAGLALSLELFY. The Cytoplasmic segment spans residues 25–210; the sequence is RYMRRRKPLR…YNFFPEKENK (186 aa). The 28-residue stretch at 138–165 folds into the PLD phosphodiesterase domain; the sequence is SSGYMHHKFAVVDGTVVLTGSLNWTVQA. Catalysis depends on residues histidine 143, lysine 145, and aspartate 150.

This sequence belongs to the phospholipase D family. MitoPLD/Zucchini subfamily. Homodimer.

It localises to the mitochondrion outer membrane. It catalyses the reaction a cardiolipin + H2O = a 1,2-diacyl-sn-glycero-3-phospho-(1'-sn-glycerol) + a 1,2-diacyl-sn-glycero-3-phosphate + H(+). Functionally, presents phospholipase and nuclease activities, depending on the different physiological conditions. Plays a key role in mitochondrial fusion and fission via its phospholipase activity. In its phospholipase role, it uses the mitochondrial lipid cardiolipin as substrate to generate phosphatidate (PA or 1,2-diacyl-sn-glycero-3-phosphate), a second messenger signaling lipid. Production of PA facilitates Mitofusin-mediated fusion, whereas the cleavage of PA by the Lipin family of phosphatases produces diacylgycerol (DAG) which promotes mitochondrial fission. Regulates mitochondrial shape through facilitating mitochondrial fusion. During spermatogenesis, plays a critical role in PIWI-interacting RNA (piRNA) biogenesis. piRNAs provide essential protection against the activity of mobile genetic elements. piRNA-mediated transposon silencing is thus critical for maintaining genome stability, in particular in germline cells when transposons are mobilized as a consequence of wide-spread genomic demethylation. Has been shown to be a backbone-non-specific, single strand-specific nuclease, cleaving either RNA or DNA substrates with similar affinity. Produces 5' phosphate and 3' hydroxyl termini, suggesting it could directly participate in the processing of primary piRNA transcripts. Has been proposed to act as a cardiolipin hydrolase to generate phosphatidic acid at mitochondrial surface. Although it cannot be excluded that it can act as a phospholipase in some circumstances, this activity could not be confirmed. The protein is Mitochondrial cardiolipin hydrolase (pld6) of Xenopus laevis (African clawed frog).